A 213-amino-acid polypeptide reads, in one-letter code: Ubiquitin-conjugating enzyme E2 S (213 aa).

A UBC core domain is found at 13–159; that stretch reads QIIRQVAKEV…ARMMTEIHAK (147 aa). The Glycyl thioester intermediate role is filled by C97. The disordered stretch occupies residues 157-213; it reads HAKPTTKTAPTKNEETNCPSTSGTQSTSEGPMAKKHAGDKNAAEKKKKEKKRALRRL. Residues 174–185 show a composition bias toward polar residues; it reads CPSTSGTQSTSE. The span at 192-202 shows a compositional bias: basic and acidic residues; the sequence is HAGDKNAAEKK. The segment covering 203 to 213 has biased composition (basic residues); it reads KKEKKRALRRL.

It belongs to the ubiquitin-conjugating enzyme family.

It catalyses the reaction S-ubiquitinyl-[E1 ubiquitin-activating enzyme]-L-cysteine + [E2 ubiquitin-conjugating enzyme]-L-cysteine = [E1 ubiquitin-activating enzyme]-L-cysteine + S-ubiquitinyl-[E2 ubiquitin-conjugating enzyme]-L-cysteine.. The protein operates within protein modification; protein ubiquitination. Functionally, catalyzes the covalent attachment of ubiquitin to other proteins. Acts as an essential factor of the anaphase promoting complex/cyclosome (APC/C), a cell cycle-regulated ubiquitin ligase that controls progression through mitosis. Acts by specifically elongating polyubiquitin chains initiated by the E2 enzyme UBCH10 on APC/C substrates, enhancing the degradation of APC/C substrates by the proteasome and promoting mitotic exit. The polypeptide is Ubiquitin-conjugating enzyme E2 S (Branchiostoma floridae (Florida lancelet)).